The primary structure comprises 285 residues: MPVVTMRQMLDNGVHFGHQTRRWNPKMKRFIFTERNGIYIIDLQQSLGFIDKAYEAVKATVAHGGTILFVGTKKQAQEAIAEQATRVGMPYVNHRWLGGMLTNFQTVSKRIDRMKELEEVDFDDVAGSQYTKKELLLLRREKEKLERTLGGIRNLTKTPSLIWIVDTKKEHLAVDEAQKLGVPIVAILDTNCDPDEVAFPIPGNDDSIRSVSLLTRVVADAVAEGLMKRHNGKSNAAEEPMAEWERELLEQHEEQKSQDAAPAEQSAPAAEAPAETEQKDAPAAE.

Residues 229-285 are disordered; the sequence is RHNGKSNAAEEPMAEWERELLEQHEEQKSQDAAPAEQSAPAAEAPAETEQKDAPAAE. The segment covering 243–257 has biased composition (basic and acidic residues); it reads EWERELLEQHEEQKS. Positions 260–275 are enriched in low complexity; the sequence is AAPAEQSAPAAEAPAE. Basic and acidic residues predominate over residues 276–285; that stretch reads TEQKDAPAAE.

Belongs to the universal ribosomal protein uS2 family.

This is Small ribosomal subunit protein uS2 from Kocuria rhizophila (strain ATCC 9341 / DSM 348 / NBRC 103217 / DC2201).